The primary structure comprises 201 residues: MAKRVTGPEIEKLIQLLAKVPGLGPRSARRAALHLVKKKEQLLGPLAEAMGEAHRKVKICSCCGNVDTIDPCTVCGDERRDQAVIIVVEDVADLWALERAGAMNAAYHVLGGTLSPLDGIGPEDLNIRALVDRVAKGGVRELIIAVNATVEGQTTAHYITDQLEGMEVRITRLAHGVPVGGELDYLDEGTLAAALRARTAI.

The segment at 60-75 (CSCCGNVDTIDPCTVC) adopts a C4-type zinc-finger fold. The Toprim domain maps to 83–178 (AVIIVVEDVA…RITRLAHGVP (96 aa)).

It belongs to the RecR family.

In terms of biological role, may play a role in DNA repair. It seems to be involved in an RecBC-independent recombinational process of DNA repair. It may act with RecF and RecO. This is Recombination protein RecR from Sinorhizobium medicae (strain WSM419) (Ensifer medicae).